We begin with the raw amino-acid sequence, 67 residues long: DNA-directed RNA polymerase subunit omega (67 aa).

Belongs to the RNA polymerase subunit omega family. As to quaternary structure, the RNAP catalytic core consists of 2 alpha, 1 beta, 1 beta' and 1 omega subunit. When a sigma factor is associated with the core the holoenzyme is formed, which can initiate transcription.

It catalyses the reaction RNA(n) + a ribonucleoside 5'-triphosphate = RNA(n+1) + diphosphate. Promotes RNA polymerase assembly. Latches the N- and C-terminal regions of the beta' subunit thereby facilitating its interaction with the beta and alpha subunits. The chain is DNA-directed RNA polymerase subunit omega from Leptothrix cholodnii (strain ATCC 51168 / LMG 8142 / SP-6) (Leptothrix discophora (strain SP-6)).